The primary structure comprises 837 residues: Outer membrane usher protein HifC (837 aa).

The N-terminal stretch at 1 to 26 (MKTKNFPLNKIAFACTLLLANPVAWA) is a signal peptide. Residues C813 and C833 are joined by a disulfide bond.

Belongs to the fimbrial export usher family.

The protein resides in the cell outer membrane. In terms of biological role, essential for piliation. The protein is Outer membrane usher protein HifC (hifC) of Haemophilus influenzae.